The chain runs to 283 residues: Probable protein phosphatase 2C 17 (283 aa).

The PPM-type phosphatase domain maps to 32-282 (KYGFSLIKGK…DDISCIVVRF (251 aa)). The Mn(2+) site is built by aspartate 69, glycine 70, aspartate 234, and aspartate 273.

Belongs to the PP2C family. Mg(2+) is required as a cofactor. Requires Mn(2+) as cofactor.

It catalyses the reaction O-phospho-L-seryl-[protein] + H2O = L-seryl-[protein] + phosphate. It carries out the reaction O-phospho-L-threonyl-[protein] + H2O = L-threonyl-[protein] + phosphate. This is Probable protein phosphatase 2C 17 from Arabidopsis thaliana (Mouse-ear cress).